The sequence spans 297 residues: Tyrosine recombinase XerD (297 aa).

Residues 1-86 (MKDSALIELF…AMRKLFQYLY (86 aa)) form the Core-binding (CB) domain. The Tyr recombinase domain maps to 107-291 (RLPKYLTEQQ…AKERLKHLHE (185 aa)). Residues R147, K171, H243, R246, and H269 contribute to the active site. The active-site O-(3'-phospho-DNA)-tyrosine intermediate is the Y278.

It belongs to the 'phage' integrase family. XerD subfamily. Forms a cyclic heterotetrameric complex composed of two molecules of XerC and two molecules of XerD.

The protein resides in the cytoplasm. Its function is as follows. Site-specific tyrosine recombinase, which acts by catalyzing the cutting and rejoining of the recombining DNA molecules. The XerC-XerD complex is essential to convert dimers of the bacterial chromosome into monomers to permit their segregation at cell division. It also contributes to the segregational stability of plasmids. This Pasteurella multocida (strain Pm70) protein is Tyrosine recombinase XerD.